Here is a 154-residue protein sequence, read N- to C-terminus: MGVQTHVLELTSSVSAEKIFQGFVIDVDTVLPKAAPGAYKSVEIKGDGGPGTLKIITLPDGGPITTMTLRIDGVNKEALTFDYSVIDGDILLGFIESIENHVVLVPTADGGSICKTTAIFHTKGDAVVPEENIKYANEQNTALFKALEAYLIAN.

This sequence belongs to the BetVI family.

The protein is Major allergen Api g 1, isoallergen 1 of Apium graveolens (Celery).